A 320-amino-acid polypeptide reads, in one-letter code: Olfactory receptor 51E2 (320 aa).

Residues 1–24 (MSSCNFTHATFMLIGIPGLEEAHF) are Extracellular-facing. Residue N5 is glycosylated (N-linked (GlcNAc...) asparagine). Residues 25–45 (WFGFPLLSMYAVALFGNCIVV) form a helical membrane-spanning segment. Topologically, residues 46–53 (FIVRTERS) are cytoplasmic. A helical transmembrane segment spans residues 54-74 (LHAPMYLFLCMLAAIDLALST). The Extracellular portion of the chain corresponds to 75-98 (STMPKILALFWFDSREITFDACLA). C96 and C178 are oxidised to a cystine. Residues 99–119 (QMFFIHALSAIESTILLAMAF) form a helical membrane-spanning segment. Residues 120–138 (DRYVAICHPLRHAAVLNNT) are Cytoplasmic-facing. Residues 139-159 (VTVQIGMVALVRGSLFFFPLP) traverse the membrane as a helical segment. Topologically, residues 160–195 (LLIKRLAFCHSNVLSHSYCVHQDVMKLAYTDTLPNV) are extracellular. A helical transmembrane segment spans residues 196–216 (VYGLTAILLVMGVDVMFISLS). Residues 217–236 (YFLIIRAVLQLPSKSERAKA) are Cytoplasmic-facing. The helical transmembrane segment at 237–257 (FGTCVSHIGVVLAFYVPLIGL) threads the bilayer. Over 258-272 (SVVHRFGNSLDPIVH) the chain is Extracellular. Residues 273–293 (VLMGDVYLLLPPVINPIIYGA) traverse the membrane as a helical segment. The Cytoplasmic portion of the chain corresponds to 294–320 (KTKQIRTRVLAMFKISCDKDIEAGGNT).

It belongs to the G-protein coupled receptor 1 family. As to expression, expressed in brain and liver. Expressed only in some areas of the brain and in the olfactory epithelium.

The protein localises to the cell membrane. It is found in the early endosome membrane. In terms of biological role, olfactory receptor. The activity of this receptor is probably mediated by G-proteins which induce elevation of intracellular Ca(2+), cAMP and activation of phosphorylation of the protein kinases PKA and MAPK3/MAPK1. Activation of OR51E2 may affect melanocyte proliferation, differentiation, and melanogenesis and may increase proliferation and migration of primary retinal pigment epithelial (RPE) cells. Activated by the short chain fatty acids (SCFA), acetate and propionate. In response to SCFA, may positively regulate renin secretion and increase blood pressure. May also be activated by steroid hormones and regulate cell proliferation. Activated by L-lactate in glomus cells. The sequence is that of Olfactory receptor 51E2 (Or51e2) from Rattus norvegicus (Rat).